A 90-amino-acid polypeptide reads, in one-letter code: DNA-binding protein HU-alpha (90 aa).

It belongs to the bacterial histone-like protein family. As to quaternary structure, heterodimer of an alpha and a beta chain.

Its function is as follows. Histone-like DNA-binding protein which is capable of wrapping DNA to stabilize it, and thus to prevent its denaturation under extreme environmental conditions. This chain is DNA-binding protein HU-alpha (hupA), found in Vibrio cholerae serotype O1 (strain ATCC 39315 / El Tor Inaba N16961).